The primary structure comprises 633 residues: MHGLLLAAAGLLSLPLHVLAHPQPSTNLAGRGVDLDAYRMADRSSYMSSDDMKLKQPAIASLSGGNYVDTATEVVKRMMPGMTFRMVDDHYVGESGISHVYFRQTMHGMDIDNADFNVNIGKDGKVLSLGHSFYTGPAPDKAPVEKRDFSDPMQAFHGACKALNLPINADKATIQTMNEHEVMFMGTSGAMSDPQGKLCYMAKEDGTLALTWRVETDMGDNWLLSYVDAKETDKVHNVVDYVSHATYQVYKWPIPDPTEGKREIVQNPWNLKTSPFTWISDGKTNYTTTRGNNAIAQANFDGGEDYLNNYRPDSKNLKFEYPYAPNMSPPKSYIDASVTQLFYSANMVHDLYYMLGFTEKAGNFQVNNRGQGGKGNDFVILNAQDGSGTNNANFATPPDGKPGRMRVYIWTKAKPSRDSSFEAGTVIHEYTHGLSNRLCGGPANAGCLNGMESGGMGEGWGDFFATAIRLKPNDNRNSNYVHGEWVNNSPKGNRLYPYSTNLQTNPLVYTSCNKYNEVHAIGTVWCSILYEVLWNLIDKHGKNDGPTPVFENGVPNDGKYLALKLVLDGMAIQPCKPTFVQARDAIIDADMNLTKGSNKCELWKAFAKRGLGVGAKYDPKNRTGSKAVPKECQ.

A signal peptide spans 1–20 (MHGLLLAAAGLLSLPLHVLA). Positions 21 to 244 (HPQPSTNLAG…VHNVVDYVSH (224 aa)) are excised as a propeptide. The N-linked (GlcNAc...) asparagine glycan is linked to N285. Position 428 (H428) interacts with Zn(2+). E429 is an active-site residue. H432 provides a ligand contact to Zn(2+). Residues N592 and N621 are each glycosylated (N-linked (GlcNAc...) asparagine).

The protein belongs to the peptidase M36 family. Requires Zn(2+) as cofactor.

Its subcellular location is the secreted. Its function is as follows. Secreted metalloproteinase probably acting as a virulence factor. The chain is Probable extracellular metalloproteinase 5 (MEP5) from Arthroderma benhamiae (strain ATCC MYA-4681 / CBS 112371) (Trichophyton mentagrophytes).